The sequence spans 162 residues: Caveolin-2 (162 aa).

At 1-86 (MGLETEKADV…FEISKYVIYK (86 aa)) the chain is on the cytoplasmic side. Tyr-19 carries the post-translational modification Phosphotyrosine; by SRC. Phosphoserine occurs at positions 20 and 23. Phosphotyrosine; by SRC is present on Tyr-27. Residues 87–107 (FLTVFLAIPLAFVAGILFATL) constitute an intramembrane region (helical). The Cytoplasmic portion of the chain corresponds to 108 to 162 (SCLHIWIIMPFVKTCLMLLPSVQTIWKSVTDVVIAPLCTSAGRSFSSVSLQLSHD).

It belongs to the caveolin family. In terms of assembly, monomer or homodimer. Interacts with CAV1; the interaction forms a stable heterooligomeric complex that is required for targeting to lipid rafts and for caveolae formation. Tyrosine phosphorylated forms do not form heterooligomers with the Tyr-19-phosphorylated form existing as a monomer or dimer, and the Tyr-27-form as a monomer only. Interacts (tyrosine phosphorylated form) with the SH2 domain-containing proteins, RASA1, NCK1 and SRC. Interacts (tyrosine phosphorylated form) with INSR, the interaction (Tyr-27-phosphorylated form) is increased on insulin stimulation. Interacts (Tyr-19 phosphorylated form) with MAPK1 (phosphorylated form); the interaction, promoted by insulin, leads to nuclear location and MAPK1 activation. Interacts with STAT3; the interaction is increased on insulin-induced tyrosine phosphorylation leading to STAT activation. Phosphorylated on serine and tyrosine residues. CAV1 promotes phosphorylation on Ser-23 which then targets the complex to the plasma membrane, lipid rafts and caveolae. Phosphorylation on both Tyr-19 and Tyr-27 is required for insulin-induced 'Ser-727' phosphorylation of STAT3 and its activation. Phosphorylation on Tyr-19 is required for insulin-induced phosphorylation of MAPK1 and DNA binding of STAT3. Tyrosine phosphorylation is induced by both EGF and insulin.

It is found in the nucleus. Its subcellular location is the cytoplasm. It localises to the golgi apparatus membrane. The protein resides in the cell membrane. The protein localises to the membrane. It is found in the caveola. Its function is as follows. May act as a scaffolding protein within caveolar membranes. Interacts directly with G-protein alpha subunits and can functionally regulate their activity. Acts as an accessory protein in conjunction with CAV1 in targeting to lipid rafts and driving caveolae formation. Positive regulator of cellular mitogenesis of the MAPK signaling pathway. Required for the insulin-stimulated nuclear translocation and activation of MAPK1 and STAT3, and the subsequent regulation of cell cycle progression. This is Caveolin-2 (CAV2) from Equus caballus (Horse).